The following is a 292-amino-acid chain: Geranyl diphosphate 2-C-methyltransferase (292 aa).

This sequence belongs to the geranyl diphosphate 2-C-methyltransferase family. Requires Mg(2+) as cofactor.

The catalysed reaction is (2E)-geranyl diphosphate + S-adenosyl-L-methionine = (E)-2-methylgeranyl diphosphate + S-adenosyl-L-homocysteine + H(+). Catalyzes the SAM-dependent methylation of geranyl diphosphate (GPP) to yield (E)-2-methylgeranyl diphosphate (2-MeGPP). This Streptomyces coelicolor (strain ATCC BAA-471 / A3(2) / M145) protein is Geranyl diphosphate 2-C-methyltransferase.